Here is a 427-residue protein sequence, read N- to C-terminus: Trigger factor (427 aa).

The PPIase FKBP-type domain occupies 165–250; the sequence is GDTVVIDFEG…LHEIQEQVPA (86 aa).

Belongs to the FKBP-type PPIase family. Tig subfamily.

The protein localises to the cytoplasm. The enzyme catalyses [protein]-peptidylproline (omega=180) = [protein]-peptidylproline (omega=0). Functionally, involved in protein export. Acts as a chaperone by maintaining the newly synthesized protein in an open conformation. Functions as a peptidyl-prolyl cis-trans isomerase. This is Trigger factor from Sulfurovum sp. (strain NBC37-1).